The sequence spans 203 residues: Tail fiber assembly protein homolog (203 aa).

Belongs to the tfa family.

The protein is Tail fiber assembly protein homolog (T) of Escherichia coli.